Here is a 385-residue protein sequence, read N- to C-terminus: 1-deoxy-D-xylulose 5-phosphate reductoisomerase (385 aa).

Residues T10, G11, S12, I13, K37, and N124 each contribute to the NADPH site. K125 contacts 1-deoxy-D-xylulose 5-phosphate. E126 contributes to the NADPH binding site. Residue D150 participates in Mn(2+) binding. Residues S151, E152, S176, and H199 each coordinate 1-deoxy-D-xylulose 5-phosphate. E152 is a Mn(2+) binding site. An NADPH-binding site is contributed by G205. S212, N217, K218, and E221 together coordinate 1-deoxy-D-xylulose 5-phosphate. E221 contributes to the Mn(2+) binding site.

The protein belongs to the DXR family. Requires Mg(2+) as cofactor. Mn(2+) is required as a cofactor.

The catalysed reaction is 2-C-methyl-D-erythritol 4-phosphate + NADP(+) = 1-deoxy-D-xylulose 5-phosphate + NADPH + H(+). The protein operates within isoprenoid biosynthesis; isopentenyl diphosphate biosynthesis via DXP pathway; isopentenyl diphosphate from 1-deoxy-D-xylulose 5-phosphate: step 1/6. In terms of biological role, catalyzes the NADPH-dependent rearrangement and reduction of 1-deoxy-D-xylulose-5-phosphate (DXP) to 2-C-methyl-D-erythritol 4-phosphate (MEP). This is 1-deoxy-D-xylulose 5-phosphate reductoisomerase from Clostridium botulinum (strain ATCC 19397 / Type A).